The primary structure comprises 155 residues: Endoribonuclease YbeY (155 aa).

H113, H117, and H123 together coordinate Zn(2+).

This sequence belongs to the endoribonuclease YbeY family. Requires Zn(2+) as cofactor.

The protein localises to the cytoplasm. In terms of biological role, single strand-specific metallo-endoribonuclease involved in late-stage 70S ribosome quality control and in maturation of the 3' terminus of the 16S rRNA. In Ureaplasma urealyticum serovar 10 (strain ATCC 33699 / Western), this protein is Endoribonuclease YbeY.